An 88-amino-acid polypeptide reads, in one-letter code: ATP synthase F(0) complex subunit f, mitochondrial (88 aa).

A2 carries the post-translational modification N-acetylalanine. A Phosphoserine modification is found at S3. K16 is modified (N6-acetyllysine). A helical transmembrane segment spans residues 62-79 (MVLAAYVVFSYCISYKEL).

The protein belongs to the ATPase F chain family. As to quaternary structure, component of the ATP synthase complex composed at least of ATP5F1A/subunit alpha, ATP5F1B/subunit beta, ATP5MC1/subunit c (homooctomer), MT-ATP6/subunit a, MT-ATP8/subunit 8, ATP5ME/subunit e, ATP5MF/subunit f, ATP5MG/subunit g, ATP5MK/subunit k, ATP5MJ/subunit j, ATP5F1C/subunit gamma, ATP5F1D/subunit delta, ATP5F1E/subunit epsilon, ATP5PF/subunit F6, ATP5PB/subunit b, ATP5PD/subunit d, ATP5PO/subunit OSCP. ATP synthase complex consists of a soluble F(1) head domain (subunits alpha(3) and beta(3)) - the catalytic core - and a membrane F(0) domain - the membrane proton channel (subunits c, a, 8, e, f, g, k and j). These two domains are linked by a central stalk (subunits gamma, delta, and epsilon) rotating inside the F1 region and a stationary peripheral stalk (subunits F6, b, d, and OSCP).

The protein localises to the mitochondrion. It is found in the mitochondrion inner membrane. Its function is as follows. Subunit f, of the mitochondrial membrane ATP synthase complex (F(1)F(0) ATP synthase or Complex V) that produces ATP from ADP in the presence of a proton gradient across the membrane which is generated by electron transport complexes of the respiratory chain. ATP synthase complex consist of a soluble F(1) head domain - the catalytic core - and a membrane F(1) domain - the membrane proton channel. These two domains are linked by a central stalk rotating inside the F(1) region and a stationary peripheral stalk. During catalysis, ATP synthesis in the catalytic domain of F(1) is coupled via a rotary mechanism of the central stalk subunits to proton translocation. In vivo, can only synthesize ATP although its ATP hydrolase activity can be activated artificially in vitro. Part of the complex F(0) domain. In Mus musculus (Mouse), this protein is ATP synthase F(0) complex subunit f, mitochondrial.